Here is a 539-residue protein sequence, read N- to C-terminus: Cytochrome c oxidase subunit 1 homolog, bacteroid (539 aa).

The next 3 membrane-spanning stretches (helical) occupy residues 4-24 (TVEM…AGLA), 28-48 (LFGA…LVLM), and 75-95 (GVVA…VVAL). His-117 provides a ligand contact to heme b. The next 8 helical transmembrane spans lie at 118–138 (TSAV…FYVV), 154–174 (FVFW…LLGI), 187–207 (VDLW…GTIM), 214–234 (IYVA…LHVV), 265–285 (GHNA…YYFI), 298–318 (LSII…PHHL), 330–350 (LGMV…INGL), and 368–388 (MMVM…MMSI). 3 residues coordinate Cu cation: His-266, His-316, and His-317. Residues His-404 and His-406 each coordinate heme b. A run of 4 helical transmembrane segments spans residues 405-425 (VHSG…YYLV), 443-463 (HFWL…VAGI), 475-495 (QGFL…YYVM), and 499-519 (GGAL…MTIL).

The protein belongs to the heme-copper respiratory oxidase family. It depends on Cu(2+) as a cofactor. Heme b serves as cofactor.

It localises to the cell membrane. It catalyses the reaction 4 Fe(II)-[cytochrome c] + O2 + 8 H(+)(in) = 4 Fe(III)-[cytochrome c] + 2 H2O + 4 H(+)(out). The protein operates within energy metabolism; oxidative phosphorylation. In terms of biological role, cytochrome c oxidase is the component of the respiratory chain that catalyzes the reduction of oxygen to water. Subunits 1-3 form the functional core of the enzyme complex. Co I is the catalytic subunit of the enzyme. Electrons originating in cytochrome c or a quinol are transferred to the bimetallic center formed by a high-spin heme and copper B. The sequence is that of Cytochrome c oxidase subunit 1 homolog, bacteroid (fixN) from Rhizobium meliloti (strain 1021) (Ensifer meliloti).